Reading from the N-terminus, the 235-residue chain is Interleukin-34 (235 aa).

The signal sequence occupies residues 1–20 (MPWGLAWLYCLGILLDVALG). Residue Asn100 is glycosylated (N-linked (GlcNAc...) asparagine).

The protein belongs to the IL-34 family. In terms of assembly, homodimer. Interacts with CSF1R.

The protein localises to the secreted. Cytokine that promotes the proliferation, survival and differentiation of monocytes and macrophages. Promotes the release of pro-inflammatory chemokines, and thereby plays an important role in innate immunity and in inflammatory processes. Plays an important role in the regulation of osteoclast proliferation and differentiation, and in the regulation of bone resorption. Signaling via CSF1R and its downstream effectors stimulates phosphorylation of MAPK1/ERK2 AND MAPK3/ERK1. The sequence is that of Interleukin-34 (Il34) from Mus musculus (Mouse).